The chain runs to 190 residues: Xanthine phosphoribosyltransferase (190 aa).

Residues Leu20 and Asn27 each coordinate xanthine. Residue 128–132 (ANGHA) coordinates 5-phospho-alpha-D-ribose 1-diphosphate. Lys156 serves as a coordination point for xanthine.

This sequence belongs to the purine/pyrimidine phosphoribosyltransferase family. Xpt subfamily. As to quaternary structure, homodimer.

The protein resides in the cytoplasm. It carries out the reaction XMP + diphosphate = xanthine + 5-phospho-alpha-D-ribose 1-diphosphate. Its pathway is purine metabolism; XMP biosynthesis via salvage pathway; XMP from xanthine: step 1/1. Functionally, converts the preformed base xanthine, a product of nucleic acid breakdown, to xanthosine 5'-monophosphate (XMP), so it can be reused for RNA or DNA synthesis. This Pseudomonas aeruginosa (strain LESB58) protein is Xanthine phosphoribosyltransferase.